The following is a 169-amino-acid chain: Putative phosphoesterase SSP1770 (169 aa).

Residue histidine 34 is the Proton donor of the active site. 2 short sequence motifs (HXTX) span residues 34-37 (HITI) and 115-118 (HFTI). Histidine 115 acts as the Proton acceptor in catalysis.

Belongs to the 2H phosphoesterase superfamily. YjcG family.

The protein is Putative phosphoesterase SSP1770 of Staphylococcus saprophyticus subsp. saprophyticus (strain ATCC 15305 / DSM 20229 / NCIMB 8711 / NCTC 7292 / S-41).